We begin with the raw amino-acid sequence, 452 residues long: Agmatine coumaroyltransferase (452 aa).

Catalysis depends on proton acceptor residues His-163 and Asp-396.

Belongs to the plant acyltransferase family.

It carries out the reaction 4-coumaroyl-CoA + agmatine = N-(4-guanidinobutyl)-4-hydroxycinnamamide + CoA + H(+). Involved in the biosynthesis of hydroxycinnamic acid amides, which play a role in defense against pathogens. Agmatine is the preferred acyl acceptor, lower activity is observed towards putrescine. The preferred acyl donor is p-coumaroyl-CoA, lower activity is seen towards feruloyl-CoA. This chain is Agmatine coumaroyltransferase, found in Arabidopsis thaliana (Mouse-ear cress).